Reading from the N-terminus, the 118-residue chain is MRANVLKRKLSLRIKRKKRIRAKISGTQALPRISVFKSNRTLYIQAIDDVKAVTLAAVDGRKIGVKANKEGAKKIAAEFAKALKAKNIEEAVFDRNGYLYHGVIAVLAEALRENGIKL.

This sequence belongs to the universal ribosomal protein uL18 family. In terms of assembly, part of the 50S ribosomal subunit; part of the 5S rRNA/L5/L18/L25 subcomplex. Contacts the 5S and 23S rRNAs.

Its function is as follows. This is one of the proteins that bind and probably mediate the attachment of the 5S RNA into the large ribosomal subunit, where it forms part of the central protuberance. The sequence is that of Large ribosomal subunit protein uL18 from Campylobacter lari (strain RM2100 / D67 / ATCC BAA-1060).